We begin with the raw amino-acid sequence, 295 residues long: Polyprenyl transferase dpmaC (295 aa).

Transmembrane regions (helical) follow at residues 39-59 (LFCVLAAYLFCGAGMVWNDWI), 84-104 (QAFVWMALQVIASCAVLHVML), 109-124 (VHVIPVMIASMLYPFL), 131-151 (KLHIYPQYMLAFTIAWPAIPG), 168-188 (YCLPLCTVVFFWTIYLNTAYS), 213-233 (LVLVALVCPILACLPLYLTQF), 237-257 (WLWVTWMGVWTAAFAVQLALF), and 271-291 (SNFVLGIWTIVVCSVELLLKA).

It belongs to the UbiA prenyltransferase family. The cofactor is Mg(2+).

The protein resides in the membrane. It functions in the pathway secondary metabolite biosynthesis; terpenoid biosynthesis. In terms of biological role, polyprenyl transferase; part of the gene cluster that mediates the biosynthesis of the diterpenoid pyrones subglutinols A and B. The first step of the pathway is the synthesis of the alpha-pyrone moiety by the polyketide synthase dpmaA via condensation of one acetyl-CoA starter unit with 3 malonyl-CoA units and 2 methylations. The alpha-pyrone is then combined with geranylgeranyl pyrophosphate (GGPP) formed by the GGPP synthase dpmaD through the action of the prenyltransferase dpmaC to yield a linear alpha-pyrone diterpenoid. Subsequent steps in the diterpenoid pyrone biosynthetic pathway involve the decalin core formation, which is initiated by the epoxidation of the C10-C11 olefin by the FAD-dependent oxidoreductase dpmaE, and is followed by a cyclization cascade catalyzed by the terpene cyclase dpmaB. The dehydrogenase dpmaF is then involved in tetrahydrofuran (THF) ring formation at the C5 unit to complete the formation of subglutinols A and B. The sequence is that of Polyprenyl transferase dpmaC from Metarhizium anisopliae (Entomophthora anisopliae).